Consider the following 403-residue polypeptide: S-adenosylmethionine synthase (403 aa).

ATP is bound at residue His17. Asp19 contributes to the Mg(2+) binding site. Position 45 (Glu45) interacts with K(+). 2 residues coordinate L-methionine: Glu58 and Gln104. Positions 104-114 are flexible loop; it reads QSPDIAQGVDT. ATP-binding positions include 179–181, 250–251, Asp259, 265–266, Ala282, and Lys286; these read DGK, KF, and RK. L-methionine is bound at residue Asp259. Lys290 is an L-methionine binding site.

This sequence belongs to the AdoMet synthase family. As to quaternary structure, homotetramer; dimer of dimers. It depends on Mg(2+) as a cofactor. The cofactor is K(+).

The protein resides in the cytoplasm. The enzyme catalyses L-methionine + ATP + H2O = S-adenosyl-L-methionine + phosphate + diphosphate. It participates in amino-acid biosynthesis; S-adenosyl-L-methionine biosynthesis; S-adenosyl-L-methionine from L-methionine: step 1/1. Functionally, catalyzes the formation of S-adenosylmethionine (AdoMet) from methionine and ATP. The overall synthetic reaction is composed of two sequential steps, AdoMet formation and the subsequent tripolyphosphate hydrolysis which occurs prior to release of AdoMet from the enzyme. This chain is S-adenosylmethionine synthase, found in Mycobacterium bovis (strain BCG / Pasteur 1173P2).